The chain runs to 177 residues: Cytidylate kinase (177 aa).

8 to 16 contributes to the ATP binding site; the sequence is GPPGGGKTT.

The protein belongs to the cytidylate kinase family. Type 2 subfamily.

It is found in the cytoplasm. It catalyses the reaction CMP + ATP = CDP + ADP. The catalysed reaction is dCMP + ATP = dCDP + ADP. This is Cytidylate kinase from Staphylothermus marinus (strain ATCC 43588 / DSM 3639 / JCM 9404 / F1).